A 92-amino-acid chain; its full sequence is Acyl-CoA-binding protein (92 aa).

Positions 3–88 (LKEDFEEHAE…VKQLLEAEAS (86 aa)) constitute an ACB domain. An acyl-CoA is bound by residues 30 to 34 (YGLYK), K56, and Y75.

This sequence belongs to the ACBP family.

Functionally, binds medium- and long-chain acyl-CoA esters with very high affinity and may function as an intracellular carrier of acyl-CoA esters. The chain is Acyl-CoA-binding protein from Brassica napus (Rape).